The following is a 666-amino-acid chain: Probable potassium transport system protein Kup (666 aa).

12 helical membrane passes run 16–36 (GFIIALGIVYGDIGTSPLYTM), 58–78 (ISLIIWTLTLITTIKYVLVAL), 99–119 (TPWLIVPAVIGGATLLSDGAL), 141–161 (IFQNQSNVIFATLFILLLLFA), 167–187 (TGVIGKLFGPIMFIWFAFLGI), 221–241 (IFILGSIFLATTGAEALYSDL), 253–273 (WPFVKVAIILSYCGQGAWILA), 292–312 (FTMHVVILATLAAIIASQALI), 343–363 (TYIPVINWFLFAITTSIVLLF), 373–393 (YGLAITITMLMTTILLSFFLI), 402–422 (VLLMMIFFGILEGIFFLASAV), and 424–444 (FMHGGYVVVIIAVAIIFIMTI).

It belongs to the HAK/KUP transporter (TC 2.A.72) family.

The protein resides in the cell membrane. The catalysed reaction is K(+)(in) + H(+)(in) = K(+)(out) + H(+)(out). In terms of biological role, transport of potassium into the cell. Likely operates as a K(+):H(+) symporter. This Streptococcus agalactiae serotype Ia (strain ATCC 27591 / A909 / CDC SS700) protein is Probable potassium transport system protein Kup.